We begin with the raw amino-acid sequence, 208 residues long: Small ribosomal subunit protein uS4B (208 aa).

Positions 95-160 (KRLDNVVFRL…NQVYMAAKQA (66 aa)) constitute an S4 RNA-binding domain.

It belongs to the universal ribosomal protein uS4 family. In terms of assembly, part of the 30S ribosomal subunit. Contacts protein S5. The interaction surface between S4 and S5 is involved in control of translational fidelity.

Functionally, one of the primary rRNA binding proteins, it binds directly to 16S rRNA where it nucleates assembly of the body of the 30S subunit. With S5 and S12 plays an important role in translational accuracy. This is Small ribosomal subunit protein uS4B from Bdellovibrio bacteriovorus (strain ATCC 15356 / DSM 50701 / NCIMB 9529 / HD100).